The chain runs to 333 residues: MSLHLSNVILHQLSKNDQDELMVNYRSESLVNDSSTENLVAELHRVFHSKAGKGFGCFQSDSEFQIWLNELQRGELNFYDFSQKCAVRLKEELAKYPFADEGILVFAEYQSLATDYLFVGILPLNQSLKVTEGLDISATDYLDINKMDIAARIDLSVYEADKESNRYLSYIKGRVGRKVADFFLDFLQAEVGLDSKQQNQVLMQALDDFCTDAKLEKQEVNEYKKQVYEYCNGQIKAGEEVEIRELSGELPPSPSGASFLEFTQEQGYGLEESFPADRGLVRKLTKYVGAGGGLNVSFDSLLLGERIFYDPETDTLTIKGTPPNLRDQLTRNR.

Belongs to the YejK family.

It is found in the cytoplasm. The protein resides in the nucleoid. The sequence is that of Nucleoid-associated protein VV1_3120 from Vibrio vulnificus (strain CMCP6).